The sequence spans 558 residues: Protein shisa-7 (558 aa).

Positions 1 to 22 are cleaved as a signal peptide; that stretch reads MPALLLLGTVALLASAAGPAGA. Topologically, residues 23 to 189 are extracellular; it reads RPSNDTSSVA…GGEGPGGSTA (167 aa). Asparagine 26 carries N-linked (GlcNAc...) asparagine glycosylation. 2 disordered regions span residues 53-79 and 142-181; these read GGSA…ARAP and TPPP…GRGG. The span at 57–77 shows a compositional bias: low complexity; that stretch reads AGTSANATKTSPASGTGAAAR. The span at 148-181 shows a compositional bias: gly residues; the sequence is GGAGGAGGAGGGPGPGQAGWLEGGRAGGAGGRGG. Residues 154–175 are GRID; it reads GGAGGGPGPGQAGWLEGGRAGG. A helical membrane pass occupies residues 190–210; the sequence is YVVCGVISFALAVGVGAKVAF. At 211–558 the chain is on the cytoplasmic side; sequence SKASRAPRAH…RTASKNEVTV (348 aa). Positions 236–263 are disordered; it reads QAGPATRPDRARSSSLTPGLGGPDSMAP. Serine 438 carries the post-translational modification Phosphoserine. Residues 443-506 form a disordered region; that stretch reads RQSREHLLSP…HHHHALHGSP (64 aa). Pro residues predominate over residues 453-462; the sequence is PRSPALPPDP. Residues 466-477 are compositionally biased toward low complexity; that stretch reads ASLAASHSNLLL. Position 532 is a phosphothreonine (threonine 532). The PDZ-binding motif lies at 555–558; it reads EVTV.

This sequence belongs to the shisa family. Interacts with GABA(A)R (GABA type A receptor) subunits GABRA1, GABRA2 and GABRG2; the interaction is direct. Does not interact with GABRB2 and GABRB3 subunits. Interacts with AMPAR subunits GRIA1, GRIA2 and GRIA3 and AMPAR auxiliary proteins SHISA6 and SHISA7 in heterologous cells. Interacts (via PDZ-binding motif) with DLG4/PSD-95 (via PDZ domain)in heterologous cells; the interaction is direct. N-glycosylated. As to expression, mainly expressed in neurons. Highly expressed in brain structures including cortex, striatum, olfactory bulb, amygdala hippocampus CA1-3 and dentate gyrus (at protein level).

Its subcellular location is the postsynaptic density membrane. Functionally, transmembrane protein that regulates gamma-aminobutyric acid type A receptor (GABA(A)R) trafficking, channel deactivation kinetics and pharmacology, necessary for fast inhibitory transmission in the brain. Enhances the action of benzodiazepine, a primary GABA(A)Rs target drug, in the brain. May affect channel kinetics of AMPA-type glutamate receptors (AMPAR), the brain's main excitatory neurotransmitter, necessary for synaptic hippocampal plasticity, and memory recall. May regulate the induction and maintenance of long-term potentiation at Schaffer collaterals/CA3-CA1 excitatory synapses. In Mus musculus (Mouse), this protein is Protein shisa-7.